Reading from the N-terminus, the 241-residue chain is MAGHSKWANIQHRKGRQDAKRGKIFTRLIKEITVAAKMGGADLGSNPRLRLAVDKAKAESMPKDNIENAIKRGAGLLDGVDYIECRYEGYGIGGAAVMVDCLTDNKTRTVADVRHAFSKFGGNMGTDGCVAFQFTHCGYLVFAPGTDEDALMEAALESGADDVVSNDDGSIEVITDPNSFSDIKDALEAKGFKAEMGEVTMRAQNETELSGDDAVRMQKLLDALEDLDDVQEVYTSAVLDA.

Belongs to the TACO1 family.

The protein resides in the cytoplasm. The sequence is that of Probable transcriptional regulatory protein LHK_02347 from Laribacter hongkongensis (strain HLHK9).